The following is a 146-amino-acid chain: Hemoglobin subunit beta (146 aa).

Residue V1 is modified to N-acetylvaline. Residues 2 to 146 (HLTADEKAAV…VANALAHKYH (145 aa)) enclose the Globin domain. T12 is subject to Phosphothreonine. S44 is subject to Phosphoserine. At K59 the chain carries N6-acetyllysine. Position 63 (H63) interacts with heme b. K82 carries the N6-acetyllysine modification. H92 lines the heme b pocket. At C93 the chain carries S-nitrosocysteine. At K144 the chain carries N6-acetyllysine.

This sequence belongs to the globin family. In terms of assembly, heterotetramer of two alpha chains and two beta chains. In terms of tissue distribution, red blood cells.

Its function is as follows. Involved in oxygen transport from the lung to the various peripheral tissues. This chain is Hemoglobin subunit beta (HBB), found in Odobenus rosmarus divergens (Pacific walrus).